Consider the following 127-residue polypeptide: MVISPLALRRLSYGLIALVLLSALILVWTALQRQESTLAIRPVSQGASVPDGFYIWHHLDANGIQFKSITPQDDVLLIKFDSSAQSAAAKVVLDRSLPRGYIIALQDDQSQTAVWLTRLRDTSHRFG.

Over 1–10 (MVISPLALRR) the chain is Cytoplasmic. The chain crosses the membrane as a helical span at residues 11-31 (LSYGLIALVLLSALILVWTAL). Topologically, residues 32 to 127 (QRQESTLAIR…RLRDTSHRFG (96 aa)) are periplasmic.

This sequence belongs to the MzrA family. In terms of assembly, interacts with EnvZ.

It localises to the cell inner membrane. Modulates the activity of the EnvZ/OmpR two-component regulatory system, probably by directly modulating EnvZ enzymatic activity and increasing stability of phosphorylated OmpR. This Enterobacter sp. (strain 638) protein is Modulator protein MzrA.